The sequence spans 384 residues: Lipoprotein LprN (384 aa).

Residues Met1–Gly20 form the signal peptide. The N-palmitoyl cysteine moiety is linked to residue Cys21. Cys21 carries the S-diacylglycerol cysteine lipid modification.

In terms of processing, lipidated upon expression in E.coli.

The protein localises to the cell membrane. Functionally, stimulates the host (mouse) immune response; lipidated protein produced in E.coli stimulates T-cell proliferation in mice previously sensitized with LprN. Spleenocytes from these mice produce increased amounts of TNF-alpha and IFN-gamma, as well as somewhat increased nitric oxide levels, upon subsequent challenge with LprN. Previously sensitized mice infected with M.tuberculosis have an exacerbated disease response, suggesting this lipoprotein may down-regulate the host's immune response. In Mycobacterium tuberculosis (strain ATCC 25618 / H37Rv), this protein is Lipoprotein LprN (lprN).